A 212-amino-acid polypeptide reads, in one-letter code: Guanylate kinase (212 aa).

In terms of domain architecture, Guanylate kinase-like spans 5 to 187; sequence GILCIISAPS…ALMHLQSIML (183 aa). 12-19 contributes to the ATP binding site; the sequence is APSGTGKS.

The protein belongs to the guanylate kinase family.

Its subcellular location is the cytoplasm. It carries out the reaction GMP + ATP = GDP + ADP. Its function is as follows. Essential for recycling GMP and indirectly, cGMP. The chain is Guanylate kinase from Blochmanniella pennsylvanica (strain BPEN).